Consider the following 351-residue polypeptide: Phosphoribosylformylglycinamidine cyclo-ligase (351 aa).

Belongs to the AIR synthase family.

The protein localises to the cytoplasm. It catalyses the reaction 2-formamido-N(1)-(5-O-phospho-beta-D-ribosyl)acetamidine + ATP = 5-amino-1-(5-phospho-beta-D-ribosyl)imidazole + ADP + phosphate + H(+). Its pathway is purine metabolism; IMP biosynthesis via de novo pathway; 5-amino-1-(5-phospho-D-ribosyl)imidazole from N(2)-formyl-N(1)-(5-phospho-D-ribosyl)glycinamide: step 2/2. In Azotobacter vinelandii (strain DJ / ATCC BAA-1303), this protein is Phosphoribosylformylglycinamidine cyclo-ligase.